A 247-amino-acid chain; its full sequence is Probable transcriptional regulatory protein Dvul_0986 (247 aa).

A disordered region spans residues 1-22 (MAGHSKWANIQHRKGRQDAKRG).

Belongs to the TACO1 family.

It is found in the cytoplasm. The sequence is that of Probable transcriptional regulatory protein Dvul_0986 from Nitratidesulfovibrio vulgaris (strain DP4) (Desulfovibrio vulgaris).